The sequence spans 413 residues: Aspartate aminotransferase, cytoplasmic (413 aa).

The L-aspartate site is built by Gly39 and Trp141. At Ser149 the chain carries Phosphoserine. Asn195 is a binding site for L-aspartate. Lys259 is modified (N6-(pyridoxal phosphate)lysine). Arg387 contacts L-aspartate.

It belongs to the class-I pyridoxal-phosphate-dependent aminotransferase family. As to quaternary structure, homodimer. Pyridoxal 5'-phosphate is required as a cofactor.

It localises to the cytoplasm. It catalyses the reaction L-aspartate + 2-oxoglutarate = oxaloacetate + L-glutamate. The catalysed reaction is L-cysteine + 2-oxoglutarate = 2-oxo-3-sulfanylpropanoate + L-glutamate. The enzyme catalyses (2S)-2-aminobutanoate + 2-oxoglutarate = 2-oxobutanoate + L-glutamate. It carries out the reaction 3-sulfino-L-alanine + 2-oxoglutarate = 3-sulfinopyruvate + L-glutamate. Biosynthesis of L-glutamate from L-aspartate or L-cysteine. Important regulator of levels of glutamate, the major excitatory neurotransmitter of the vertebrate central nervous system. Acts as a scavenger of glutamate in brain neuroprotection. The aspartate aminotransferase activity is involved in hepatic glucose synthesis during development and in adipocyte glyceroneogenesis. Using L-cysteine as substrate, regulates levels of mercaptopyruvate, an important source of hydrogen sulfide. Mercaptopyruvate is converted into H(2)S via the action of 3-mercaptopyruvate sulfurtransferase (3MST). Hydrogen sulfide is an important synaptic modulator and neuroprotectant in the brain. The sequence is that of Aspartate aminotransferase, cytoplasmic from Pongo abelii (Sumatran orangutan).